Consider the following 162-residue polypeptide: Tegument protein BLRF2 (162 aa).

A coiled-coil region spans residues 12–43 (VKAVDMSMEDMAARLARLESENKALKQQVLRG). The interval 121–162 (GAKGQPSPGEGTRLRESNDPNATRRARSRSRGREAKKVQISD) is disordered. Residues 151–162 (RGREAKKVQISD) are compositionally biased toward basic and acidic residues.

The protein belongs to the herpesviridae BLRF2 family. As to quaternary structure, homooligomer; homooligomerizes and binds double-stranded DNA (dsDNA) cooperatively. Interacts with host CGAS.

Its subcellular location is the virion tegument. It is found in the host cytoplasm. Functionally, plays a role in the inhibition of host innate immune system by targeting the CGAS enzymatic activity which is the principal cytosolic DNA sensor that detects invading viral DNA. Acts by inhibiting CGAS-DNA phase separation: directly binds double-stranded DNA (dsDNA) in a length dependent but sequence independent manner and is able to form DNA-induced phase separation in infected cells. DNA phase separation of ORF52 mediates disruption of liquid-like droplets in which CGAS is activated, thereby preventing CGAS activity. The polypeptide is Tegument protein BLRF2 (Epstein-Barr virus (strain GD1) (HHV-4)).